The primary structure comprises 667 residues: Chaperone protein DnaK (667 aa).

A Phosphothreonine; by autocatalysis modification is found at T196. Disordered stretches follow at residues 495–525 and 595–667; these read EANSGLSDEEIEKMKEEAEQHAEEDERRKER and AGEE…GDDE. Over residues 506–525 the composition is skewed to basic and acidic residues; the sequence is EKMKEEAEQHAEEDERRKER. Positions 595-612 are enriched in low complexity; that stretch reads AGEEIREAQQQQAQQGAA. The segment covering 630-641 has biased composition (gly residues); the sequence is GPAGGPTGGPAS. The span at 647 to 667 shows a compositional bias: acidic residues; it reads DSDEEDVQDADYEVVDEGDDE.

This sequence belongs to the heat shock protein 70 family.

In terms of biological role, acts as a chaperone. The polypeptide is Chaperone protein DnaK (Salinibacter ruber (strain DSM 13855 / M31)).